The primary structure comprises 473 residues: Siroheme synthase (473 aa).

Positions 1-206 are precorrin-2 dehydrogenase /sirohydrochlorin ferrochelatase; that stretch reads MDYLPIFMKI…GNTGEAEALL (206 aa). NAD(+)-binding positions include 22–23 and 43–44; these read TV and PK. Positions 223 to 473 are uroporphyrinogen-III C-methyltransferase; that stretch reads GEVYIIGAGP…KSLLDDRVPA (251 aa). S-adenosyl-L-methionine is bound at residue Pro232. Asp255 serves as the catalytic Proton acceptor. Lys277 functions as the Proton donor in the catalytic mechanism. S-adenosyl-L-methionine is bound by residues 308-310, Ile313, 338-339, Met390, and Gly419; these read GGD and TA.

This sequence in the N-terminal section; belongs to the precorrin-2 dehydrogenase / sirohydrochlorin ferrochelatase family. It in the C-terminal section; belongs to the precorrin methyltransferase family.

It catalyses the reaction uroporphyrinogen III + 2 S-adenosyl-L-methionine = precorrin-2 + 2 S-adenosyl-L-homocysteine + H(+). The catalysed reaction is precorrin-2 + NAD(+) = sirohydrochlorin + NADH + 2 H(+). The enzyme catalyses siroheme + 2 H(+) = sirohydrochlorin + Fe(2+). Its pathway is cofactor biosynthesis; adenosylcobalamin biosynthesis; precorrin-2 from uroporphyrinogen III: step 1/1. It participates in cofactor biosynthesis; adenosylcobalamin biosynthesis; sirohydrochlorin from precorrin-2: step 1/1. It functions in the pathway porphyrin-containing compound metabolism; siroheme biosynthesis; precorrin-2 from uroporphyrinogen III: step 1/1. The protein operates within porphyrin-containing compound metabolism; siroheme biosynthesis; siroheme from sirohydrochlorin: step 1/1. Its pathway is porphyrin-containing compound metabolism; siroheme biosynthesis; sirohydrochlorin from precorrin-2: step 1/1. Functionally, multifunctional enzyme that catalyzes the SAM-dependent methylations of uroporphyrinogen III at position C-2 and C-7 to form precorrin-2 via precorrin-1. Then it catalyzes the NAD-dependent ring dehydrogenation of precorrin-2 to yield sirohydrochlorin. Finally, it catalyzes the ferrochelation of sirohydrochlorin to yield siroheme. This Hydrogenovibrio crunogenus (strain DSM 25203 / XCL-2) (Thiomicrospira crunogena) protein is Siroheme synthase.